The following is a 119-amino-acid chain: MNPEEIRQRRLQEMQAKAQAQGAANDPEAQRQMQEQQMQYEMQKQKILRQILSEEARSRLARIKLAKPQFAEQVEMQLIQLAQAGKLPVPLTDEYFKGLLDKIYEMNRPAKKEITIMRK.

Residues 1 to 12 are compositionally biased toward basic and acidic residues; that stretch reads MNPEEIRQRRLQ. Residues 1–35 form a disordered region; sequence MNPEEIRQRRLQEMQAKAQAQGAANDPEAQRQMQE.

Belongs to the PDCD5 family.

The protein is DNA-binding protein MMP0157 of Methanococcus maripaludis (strain DSM 14266 / JCM 13030 / NBRC 101832 / S2 / LL).